The chain runs to 466 residues: Arginine biosynthesis bifunctional protein ArgJ, mitochondrial (466 aa).

The N-terminal 9 residues, 1–9 (MSSLVLKRF), are a transit peptide targeting the mitochondrion. Substrate is bound by residues threonine 183, lysine 209, threonine 232, glutamate 320, asparagine 461, and serine 466. Threonine 232 serves as the catalytic Nucleophile.

This sequence belongs to the ArgJ family. Heterodimer of an alpha and a beta chain. In terms of processing, the alpha and beta chains are autoproteolytically processed from a single precursor protein within the mitochondrion.

It is found in the mitochondrion matrix. The catalysed reaction is N(2)-acetyl-L-ornithine + L-glutamate = N-acetyl-L-glutamate + L-ornithine. It catalyses the reaction L-glutamate + acetyl-CoA = N-acetyl-L-glutamate + CoA + H(+). It functions in the pathway amino-acid biosynthesis; L-arginine biosynthesis; L-ornithine and N-acetyl-L-glutamate from L-glutamate and N(2)-acetyl-L-ornithine (cyclic): step 1/1. It participates in amino-acid biosynthesis; L-arginine biosynthesis; N(2)-acetyl-L-ornithine from L-glutamate: step 1/4. Functionally, catalyzes two activities which are involved in the cyclic version of arginine biosynthesis: the synthesis of acetylglutamate from glutamate and acetyl-CoA, and of ornithine by transacetylation between acetylornithine and glutamate. The polypeptide is Arginine biosynthesis bifunctional protein ArgJ, mitochondrial (Laccaria bicolor (strain S238N-H82 / ATCC MYA-4686) (Bicoloured deceiver)).